Consider the following 486-residue polypeptide: 23S rRNA (uracil(1939)-C(5))-methyltransferase RlmD (486 aa).

A TRAM domain is found at 14–76 (AAQDGSGLPE…NHWEQANLTA (63 aa)). 4 residues coordinate [4Fe-4S] cluster: C89, C99, C102, and C181. S-adenosyl-L-methionine contacts are provided by Q289, F318, N323, E339, N374, and D395. The active-site Nucleophile is the C442.

This sequence belongs to the class I-like SAM-binding methyltransferase superfamily. RNA M5U methyltransferase family. RlmD subfamily.

The catalysed reaction is uridine(1939) in 23S rRNA + S-adenosyl-L-methionine = 5-methyluridine(1939) in 23S rRNA + S-adenosyl-L-homocysteine + H(+). Catalyzes the formation of 5-methyl-uridine at position 1939 (m5U1939) in 23S rRNA. This chain is 23S rRNA (uracil(1939)-C(5))-methyltransferase RlmD, found in Verminephrobacter eiseniae (strain EF01-2).